A 64-amino-acid polypeptide reads, in one-letter code: Large ribosomal subunit protein bL35 (64 aa).

This sequence belongs to the bacterial ribosomal protein bL35 family.

The polypeptide is Large ribosomal subunit protein bL35 (Alcanivorax borkumensis (strain ATCC 700651 / DSM 11573 / NCIMB 13689 / SK2)).